The primary structure comprises 245 residues: uncharacterized protein (245 aa).

Residues 1–18 form the signal peptide; sequence MKSAAILALLAQALAVTA. The tract at residues 21 to 66 is disordered; the sequence is VEGDRTPGTRTLDLPNFPGGSVPTRGVEKRADLPPDNGGGNAPDPD. N-linked (GlcNAc...) asparagine glycosylation is found at asparagine 189 and asparagine 225.

It is found in the secreted. This is an uncharacterized protein from Arthroderma benhamiae (strain ATCC MYA-4681 / CBS 112371) (Trichophyton mentagrophytes).